A 465-amino-acid polypeptide reads, in one-letter code: Branched-chain amino acid permease BcaP (465 aa).

Helical transmembrane passes span 35–55, 57–77, 103–123, 133–153, 159–179, 188–208, 216–236, 258–278, 305–325, 355–375, 380–400, 413–432, and 437–456; these read LLGIGAIIGTGIFVLTGTGAV, AGPGLTISFVVAALACLFAAL, LMAFIIGWDLILEYMLAVSAV, SFLSGLGIHLPVALTAAPGAV, LFNLPAFVIVMAITYLLYLGI, IMVILKILVVLLFIAVAAVYV, FMPMGFGGVFSAAALVFFAFI, GIIFSLLVCTILYVTVSAIMT, VAGIIDIGAVLGMTTVMLVML, PYVATWFFGTMSALLGSLVPL, KLVNIGTLSAFVLISVAVIVL, CPGVPVIPGLAILFCLFLIL, and VTIVRFLVWLLIGLVIYFLY.

It belongs to the amino acid-polyamine-organocation (APC) superfamily.

The protein localises to the cell membrane. With respect to regulation, isoleucine uptake is efficiently reduced in the presence of 100-fold excess valine, leucine, alanine, threonine, serine, cysteine, asparagine, and a nonproteinaceous amino acid 4-azaleucine. In terms of biological role, branched-chain amino acid transport system which is involved in the uptake of isoleucine, valine and probably leucine. Can also transport threonine, and is active as a minor serine permease. May be an amino acid permease of rather broad specificity, because several amino acids, albeit at 100-fold excess, are able to prevent isoleucine uptake. Probably does not transport methionine. Together with BraB and BrnQ, plays an important role in the activation of CodY, a branched-chain amino acid-responsive transcriptional regulator that controls the expression of several dozen transcription units in B.subtilis. The sequence is that of Branched-chain amino acid permease BcaP from Bacillus subtilis (strain 168).